Here is a 219-residue protein sequence, read N- to C-terminus: Large ribosomal subunit protein uL4 (219 aa).

Residues Ala43–Arg101 form a disordered region. A compositionally biased stretch (basic residues) spans Gly61–Gly72.

It belongs to the universal ribosomal protein uL4 family. In terms of assembly, part of the 50S ribosomal subunit.

In terms of biological role, one of the primary rRNA binding proteins, this protein initially binds near the 5'-end of the 23S rRNA. It is important during the early stages of 50S assembly. It makes multiple contacts with different domains of the 23S rRNA in the assembled 50S subunit and ribosome. Its function is as follows. Forms part of the polypeptide exit tunnel. In Streptomyces coelicolor (strain ATCC BAA-471 / A3(2) / M145), this protein is Large ribosomal subunit protein uL4.